A 118-amino-acid chain; its full sequence is Large ribosomal subunit protein bL17 (118 aa).

This sequence belongs to the bacterial ribosomal protein bL17 family. As to quaternary structure, part of the 50S ribosomal subunit. Contacts protein L32.

The chain is Large ribosomal subunit protein bL17 from Campylobacter hominis (strain ATCC BAA-381 / DSM 21671 / CCUG 45161 / LMG 19568 / NCTC 13146 / CH001A).